Consider the following 204-residue polypeptide: Large ribosomal subunit protein eL15 (204 aa).

The protein belongs to the eukaryotic ribosomal protein eL15 family. Component of the large ribosomal subunit.

Its subcellular location is the cytoplasm. Its function is as follows. Component of the large ribosomal subunit. The ribosome is a large ribonucleoprotein complex responsible for the synthesis of proteins in the cell. In Paramisgurnus dabryanus, this protein is Large ribosomal subunit protein eL15 (rpl15).